The chain runs to 76 residues: Conopeptide X11.1 (76 aa).

A signal peptide spans 1-20; sequence MMKLSVSFLLLLMLLPFITG. The propeptide occupies 21-39; it reads EENSDSDVLKSGAAVRQGR. 4 cysteine pairs are disulfide-bonded: C42-C56, C49-C61, C55-C66, and C60-C73.

As to expression, expressed by the venom duct.

The protein resides in the secreted. In terms of biological role, antimicrobial peptide that potently inhibits growth of Mycobacterium tuberculosis (H37Rv strain) (MIC=3 uM). This Conasprella ximenes (Interrupted cone) protein is Conopeptide X11.1.